We begin with the raw amino-acid sequence, 285 residues long: Shikimate dehydrogenase (NADP(+)) (285 aa).

Residues serine 20–serine 22 and threonine 67 each bind shikimate. Residue lysine 71 is the Proton acceptor of the active site. Position 83 (glutamate 83) interacts with NADP(+). Shikimate contacts are provided by asparagine 92 and aspartate 107. Residues glycine 132–alanine 136 and leucine 230 contribute to the NADP(+) site. Shikimate is bound at residue tyrosine 232. Glycine 253 serves as a coordination point for NADP(+).

Belongs to the shikimate dehydrogenase family. In terms of assembly, homodimer.

The enzyme catalyses shikimate + NADP(+) = 3-dehydroshikimate + NADPH + H(+). It functions in the pathway metabolic intermediate biosynthesis; chorismate biosynthesis; chorismate from D-erythrose 4-phosphate and phosphoenolpyruvate: step 4/7. Its function is as follows. Involved in the biosynthesis of the chorismate, which leads to the biosynthesis of aromatic amino acids. Catalyzes the reversible NADPH linked reduction of 3-dehydroshikimate (DHSA) to yield shikimate (SA). This is Shikimate dehydrogenase (NADP(+)) from Salinibacter ruber (strain DSM 13855 / M31).